Consider the following 320-residue polypeptide: L-lactate dehydrogenase 1 (320 aa).

NAD(+)-binding positions include valine 18, aspartate 39, arginine 44, tyrosine 69, and 83–84; that span reads GA. Substrate contacts are provided by glutamine 86 and arginine 92. NAD(+) is bound by residues serine 105, 122–124, and serine 147; that span reads AAN. Substrate is bound at residue 124–127; the sequence is NPVD. Substrate is bound at residue 152 to 155; that stretch reads DSSR. Histidine 179 acts as the Proton acceptor in catalysis. At tyrosine 223 the chain carries Phosphotyrosine. Threonine 232 is a binding site for substrate.

It belongs to the LDH/MDH superfamily. LDH family. As to quaternary structure, homotetramer.

The protein resides in the cytoplasm. The enzyme catalyses (S)-lactate + NAD(+) = pyruvate + NADH + H(+). It functions in the pathway fermentation; pyruvate fermentation to lactate; (S)-lactate from pyruvate: step 1/1. In terms of biological role, catalyzes the conversion of lactate to pyruvate. In Lactiplantibacillus plantarum (strain ATCC BAA-793 / NCIMB 8826 / WCFS1) (Lactobacillus plantarum), this protein is L-lactate dehydrogenase 1.